The chain runs to 397 residues: L-rhamnonate dehydratase (397 aa).

Substrate-binding residues include histidine 25 and arginine 51. Aspartate 217, glutamate 243, and glutamate 271 together coordinate Mg(2+). Histidine 321 serves as the catalytic Proton acceptor. Residue glutamate 341 coordinates substrate.

It belongs to the mandelate racemase/muconate lactonizing enzyme family. RhamD subfamily. As to quaternary structure, homooctamer; tetramer of dimers. Mg(2+) serves as cofactor.

It carries out the reaction L-rhamnonate = 2-dehydro-3-deoxy-L-rhamnonate + H2O. It functions in the pathway carbohydrate degradation; L-rhamnose degradation. Catalyzes the dehydration of L-rhamnonate to 2-keto-3-deoxy-L-rhamnonate (KDR). Also shows activity with L-lyxonate and L-mannonate, with much lower catalytic efficiency. Catalyzes the third step in an alternative pathway for rhamnose utilization that does not involve phosphorylated intermediates. This is L-rhamnonate dehydratase from Sphingomonas sp. (strain SKA58).